We begin with the raw amino-acid sequence, 353 residues long: Rhodopsin (353 aa).

Over Met-1–Ala-36 the chain is Extracellular. Residues Asn-2 and Asn-15 are each glycosylated (N-linked (GlcNAc...) asparagine). Residues Tyr-37–Val-61 traverse the membrane as a helical segment. At Thr-62–Asn-73 the chain is on the cytoplasmic side. A helical membrane pass occupies residues Tyr-74–Tyr-96. Residues Thr-97–Cys-110 are Extracellular-facing. Residues Cys-110 and Cys-187 are joined by a disulfide bond. Residues Asn-111–Ile-133 traverse the membrane as a helical segment. Positions Glu-134–Trp-136 match the 'Ionic lock' involved in activated form stabilization motif. Over Glu-134–His-152 the chain is Cytoplasmic. The chain crosses the membrane as a helical span at residues Ala-153–Val-173. Over Gly-174–Ser-202 the chain is Extracellular. N-linked (GlcNAc...) asparagine glycosylation occurs at Asn-200. The chain crosses the membrane as a helical span at residues Phe-203 to Gly-224. Residues Arg-225–Arg-252 lie on the Cytoplasmic side of the membrane. Residues Met-253–Trp-274 form a helical membrane-spanning segment. Topologically, residues Ile-275 to Val-286 are extracellular. A helical transmembrane segment spans residues Phe-287–Cys-308. Lys-296 carries the post-translational modification N6-(retinylidene)lysine. Over Leu-309–Ala-353 the chain is Cytoplasmic. 2 S-palmitoyl cysteine lipidation sites follow: Cys-322 and Cys-323. The interval Glu-331–Ala-353 is disordered. Residues Ala-334–Ala-353 show a composition bias toward low complexity.

It belongs to the G-protein coupled receptor 1 family. Opsin subfamily. Post-translationally, phosphorylated on some or all of the serine and threonine residues present in the C-terminal region. Contains one covalently linked retinal chromophore.

It localises to the membrane. The protein resides in the cell projection. The protein localises to the cilium. Its subcellular location is the photoreceptor outer segment. In terms of biological role, photoreceptor required for image-forming vision at low light intensity. While most salt water fish species use retinal as chromophore, most freshwater fish use 3-dehydroretinal, or a mixture of retinal and 3-dehydroretinal. Light-induced isomerization of 11-cis to all-trans retinal triggers a conformational change that activates signaling via G-proteins. Subsequent receptor phosphorylation mediates displacement of the bound G-protein alpha subunit by arrestin and terminates signaling. The polypeptide is Rhodopsin (rho) (Lithognathus mormyrus (Striped seabream)).